Reading from the N-terminus, the 103-residue chain is Ig lambda chain C region (103 aa).

An Ig-like domain is found at 6–99 (PTITLFPPSK…NGTSITKTLK (94 aa)). A disulfide bridge connects residues C28 and C85.

The protein is Ig lambda chain C region of Gallus gallus (Chicken).